The primary structure comprises 740 residues: NAD(P)H-quinone oxidoreductase subunit 5, chloroplastic (740 aa).

16 helical membrane passes run 9–29, 40–60, 89–109, 125–145, 147–167, 185–205, 219–239, 258–278, 286–306, 327–347, 354–374, 396–416, 425–445, 543–563, 602–622, and 717–737; these read WIIPFIPLPVPMLIGAGLILF, WAFQSVLLLSIVMIFSIYLSI, IDPLTSIMSILITTVGIMVLI, FAYMSFFSTSMLGLVTSSNLI, IYIFWELVGLCSYLLIGFWFT, GDFGLLLGILGFYWITGSFEF, NEVNFLFVTLCAVLLFAGAVS, TPISALIHAATMVAAGIFLVA, VIPYIMYLISVIGIITVLLGA, LGYMMLALGMGSYRSALFHLI, ALLFLGSGSIIHSMETIVGYS, ITFLLGTLSLCGIPPLACFWS, WLYSPIFAIIAWATAGLTAFY, LFPIFVLGLFTLFVGAIGIPF, VVSVSIAYFGIFIASFLYKPV, and SYLFLYLAYVSVFLLVYYLLF.

The protein belongs to the complex I subunit 5 family. NDH is composed of at least 16 different subunits, 5 of which are encoded in the nucleus.

The protein resides in the plastid. It is found in the chloroplast thylakoid membrane. It catalyses the reaction a plastoquinone + NADH + (n+1) H(+)(in) = a plastoquinol + NAD(+) + n H(+)(out). It carries out the reaction a plastoquinone + NADPH + (n+1) H(+)(in) = a plastoquinol + NADP(+) + n H(+)(out). In terms of biological role, NDH shuttles electrons from NAD(P)H:plastoquinone, via FMN and iron-sulfur (Fe-S) centers, to quinones in the photosynthetic chain and possibly in a chloroplast respiratory chain. The immediate electron acceptor for the enzyme in this species is believed to be plastoquinone. Couples the redox reaction to proton translocation, and thus conserves the redox energy in a proton gradient. The polypeptide is NAD(P)H-quinone oxidoreductase subunit 5, chloroplastic (ndhF) (Solanum bulbocastanum (Wild potato)).